Consider the following 159-residue polypeptide: Major allergen Mal d 1 (159 aa).

It belongs to the BetVI family.

The protein is Major allergen Mal d 1 of Malus domestica (Apple).